Consider the following 480-residue polypeptide: RuvB-like helicase 2 (480 aa).

76–83 contacts ATP; the sequence is GPPSTGKT.

This sequence belongs to the RuvB family. As to quaternary structure, may form heterododecamers with RVB1. Component of the SWR1 chromatin remodeling complex, the INO80 chromatin remodeling complex, and of the R2TP complex.

Its subcellular location is the nucleus. It catalyses the reaction ATP + H2O = ADP + phosphate + H(+). Functionally, DNA helicase which participates in several chromatin remodeling complexes, including the SWR1 and the INO80 complexes. The SWR1 complex mediates the ATP-dependent exchange of histone H2A for the H2A variant HZT1 leading to transcriptional regulation of selected genes by chromatin remodeling. The INO80 complex remodels chromatin by shifting nucleosomes and is involved in DNA repair. Also involved in pre-rRNA processing. The sequence is that of RuvB-like helicase 2 (RVB2) from Debaryomyces hansenii (strain ATCC 36239 / CBS 767 / BCRC 21394 / JCM 1990 / NBRC 0083 / IGC 2968) (Yeast).